The sequence spans 274 residues: 4-hydroxy-tetrahydrodipicolinate reductase (274 aa).

Residue 7–12 (GVTGRM) coordinates NAD(+). Residue R40 participates in NADP(+) binding. Residues 103–105 (GTT) and 127–130 (SANF) each bind NAD(+). The active-site Proton donor/acceptor is the H160. H161 contributes to the (S)-2,3,4,5-tetrahydrodipicolinate binding site. The active-site Proton donor is K164. 170 to 171 (GT) is a (S)-2,3,4,5-tetrahydrodipicolinate binding site.

The protein belongs to the DapB family. As to quaternary structure, homotetramer.

It is found in the cytoplasm. It carries out the reaction (S)-2,3,4,5-tetrahydrodipicolinate + NAD(+) + H2O = (2S,4S)-4-hydroxy-2,3,4,5-tetrahydrodipicolinate + NADH + H(+). The catalysed reaction is (S)-2,3,4,5-tetrahydrodipicolinate + NADP(+) + H2O = (2S,4S)-4-hydroxy-2,3,4,5-tetrahydrodipicolinate + NADPH + H(+). It participates in amino-acid biosynthesis; L-lysine biosynthesis via DAP pathway; (S)-tetrahydrodipicolinate from L-aspartate: step 4/4. Its function is as follows. Catalyzes the conversion of 4-hydroxy-tetrahydrodipicolinate (HTPA) to tetrahydrodipicolinate. In Blochmanniella floridana, this protein is 4-hydroxy-tetrahydrodipicolinate reductase.